The sequence spans 81 residues: MEGPGAGSGFRKELVSRLLHLHFKDDKTKVSGDALQLMVELLKVFVVEAAVRGVRQAQAEDALRVDVDQLEKVLPQLLLDF.

At Met-1 the chain carries N-acetylmethionine.

This sequence belongs to the CENP-X/MHF2 family. In terms of assembly, heterodimer with CENPX, sometimes called MHF; this interaction stabilizes both partners. MHF heterodimers can assemble to form tetrameric structures. MHF also coassemble with CENPT-CENPW heterodimers at centromeres to form the tetrameric CENP-T-W-S-X complex. Forms a discrete complex with FANCM and CENPX, called FANCM-MHF; this interaction, probably mediated by direct binding between CENPS and FANCM, leads to synergistic activation of double-stranded DNA binding and strongly stimulates FANCM-mediated DNA remodeling. Recruited by FANCM to the Fanconi anemia (FA) core complex, which consists of CENPS, CENPX, FANCA, FANCB, FANCC, FANCE, FANCF, FANCG, FANCL, FANCM, FAAP24 and FAAP100. The FA core complex associates with Bloom syndrome (BLM) complex, which consists of at least BLM, DNA topoisomerase 3-alpha (TOP3A), RMI1/BLAP75, RPA1/RPA70 and RPA2/RPA32. The super complex between FA and BLM is called BRAFT.

It localises to the nucleus. Its subcellular location is the chromosome. The protein localises to the centromere. The protein resides in the kinetochore. DNA-binding component of the Fanconi anemia (FA) core complex. Required for the normal activation of the FA pathway, leading to monoubiquitination of the FANCI-FANCD2 complex in response to DNA damage, cellular resistance to DNA cross-linking drugs, and prevention of chromosomal breakage. In complex with CENPS (MHF heterodimer), crucial cofactor for FANCM in both binding and ATP-dependent remodeling of DNA. Stabilizes FANCM. In complex with CENPS and FANCM (but not other FANC proteins), rapidly recruited to blocked forks and promotes gene conversion at blocked replication forks. In complex with CENPS, CENPT and CENPW (CENP-T-W-S-X heterotetramer), involved in the formation of a functional kinetochore outer plate, which is essential for kinetochore-microtubule attachment and faithful mitotic progression. As a component of MHF and CENP-T-W-S-X complexes, binds DNA and bends it to form a nucleosome-like structure. DNA-binding function is fulfilled in the presence of CENPS, with the following preference for DNA substates: Holliday junction &gt; double-stranded &gt; splay arm &gt; single-stranded. Does not bind DNA on its own. This is Centromere protein X (CENPX) from Pongo abelii (Sumatran orangutan).